Consider the following 419-residue polypeptide: MEAENGEGQVQVHLKTKQEHYAVPDVPYAIDGSVSTTELNIFLNALLQSKGAEGVDFDFLVFDEYLRGRLCDHLREKAISFEDAIDIEYVERFPAPEPQDCLLHDDWVSAVKACGKWILTGCYDNTINIWTNKGKHKLTIPGHTAPIKAVDWISMDDENGRFVSTSQDQTAMLWQWNIASNAVECVSVCKGHERGVDSVCVSPDAQRFATGSWDTMLKIWSAGLDDTSEGTAKRVKESGVRTPKMTLQGHRESISAVQWMDATTLVTGSWDHTLKVWDLQLEGIKTEISTNKSIFDASYSKLNRLIVTASADKNLRLYDARTNQGSVVRNTYLGHNAWVQTVMWSNTEEFLFVSGSYDTQNKLWDCRSPKAPLYDLLGHGEKVLDIDWSNPKYIVSGGADNTVRVFKSGKATIENMETK.

Residues 10–91 (VQVHLKTKQE…EDAIDIEYVE (82 aa)) form a ubiquitin-like (UBL) domain region. WD repeat units follow at residues 103–140 (LHDD…KLTI), 142–184 (GHTA…NAVE), 191–230 (GHER…TSEG), 249–287 (GHRE…IKTE), 289–328 (STNK…GSVV), 334–374 (GHNA…APLY), and 378–416 (GHGE…IENM).

The protein belongs to the WD repeat WDR12/YTM1 family.

The protein localises to the nucleus. Its subcellular location is the nucleolus. The protein resides in the nucleoplasm. Required for maturation of ribosomal RNAs and formation of the large ribosomal subunit. The chain is Ribosome biogenesis protein WDR12 homolog from Drosophila virilis (Fruit fly).